The chain runs to 140 residues: Large ribosomal subunit protein uL16 (140 aa).

Belongs to the universal ribosomal protein uL16 family. In terms of assembly, part of the 50S ribosomal subunit.

Binds 23S rRNA and is also seen to make contacts with the A and possibly P site tRNAs. In Phytoplasma mali (strain AT), this protein is Large ribosomal subunit protein uL16.